Reading from the N-terminus, the 374-residue chain is Phosphate acyltransferase (374 aa).

The segment at Ala-323–Pro-374 is disordered. Residues Val-326 to Pro-335 are compositionally biased toward basic and acidic residues.

This sequence belongs to the PlsX family. Homodimer. Probably interacts with PlsY.

The protein resides in the cytoplasm. The enzyme catalyses a fatty acyl-[ACP] + phosphate = an acyl phosphate + holo-[ACP]. It functions in the pathway lipid metabolism; phospholipid metabolism. Catalyzes the reversible formation of acyl-phosphate (acyl-PO(4)) from acyl-[acyl-carrier-protein] (acyl-ACP). This enzyme utilizes acyl-ACP as fatty acyl donor, but not acyl-CoA. The polypeptide is Phosphate acyltransferase (Synechococcus sp. (strain JA-2-3B'a(2-13)) (Cyanobacteria bacterium Yellowstone B-Prime)).